Reading from the N-terminus, the 532-residue chain is Spore germination protein 270-11 (532 aa).

2 disordered regions span residues 113-225 (TTTS…GYGS) and 328-436 (LSPT…TTGT). Positions 329–426 (SPTCSDSSSP…GSGSSSETQP (98 aa)) are enriched in low complexity. 13 consecutive repeat copies span residues 339–342 (TPTP), 343–346 (TETP), 347–350 (TETP), 351–354 (TETP), 355–358 (TETP), 359–362 (TETP), 363–366 (TETP), 367–370 (TETP), 371–374 (TETE), 375–378 (TPTP), 397–400 (TPTP), 401–404 (TETD), and 405–408 (TPTP). The interval 339–378 (TPTPTETPTETPTETPTETPTETPTETPTETPTETETPTP) is 10 X 4 AA tandem repeats of T-[EP]-T-[EP]. The segment at 397–408 (TPTPTETDTPTP) is 3 X 4 AA tandem repeats of T-[EP]-T-[PD].

The protein is Spore germination protein 270-11 (celB) of Dictyostelium discoideum (Social amoeba).